Reading from the N-terminus, the 237-residue chain is 6-carboxyhexanoate--CoA ligase (237 aa).

It belongs to the BioW family. Homodimer. It depends on Mg(2+) as a cofactor.

It carries out the reaction heptanedioate + ATP + CoA = 6-carboxyhexanoyl-CoA + AMP + diphosphate. Its pathway is metabolic intermediate metabolism; pimeloyl-CoA biosynthesis; pimeloyl-CoA from pimelate: step 1/1. In terms of biological role, catalyzes the transformation of pimelate into pimeloyl-CoA with concomitant hydrolysis of ATP to AMP. This chain is 6-carboxyhexanoate--CoA ligase, found in Methanocaldococcus jannaschii (strain ATCC 43067 / DSM 2661 / JAL-1 / JCM 10045 / NBRC 100440) (Methanococcus jannaschii).